The primary structure comprises 362 residues: Phosphoserine aminotransferase (362 aa).

L-glutamate is bound by residues serine 9 and arginine 42. Pyridoxal 5'-phosphate is bound by residues 76–77 (GR), tryptophan 102, threonine 153, aspartate 174, and glutamine 197. Residue lysine 198 is modified to N6-(pyridoxal phosphate)lysine. Residue 239 to 240 (NT) coordinates pyridoxal 5'-phosphate.

The protein belongs to the class-V pyridoxal-phosphate-dependent aminotransferase family. SerC subfamily. Homodimer. Pyridoxal 5'-phosphate serves as cofactor.

It is found in the cytoplasm. The catalysed reaction is O-phospho-L-serine + 2-oxoglutarate = 3-phosphooxypyruvate + L-glutamate. The enzyme catalyses 4-(phosphooxy)-L-threonine + 2-oxoglutarate = (R)-3-hydroxy-2-oxo-4-phosphooxybutanoate + L-glutamate. It participates in amino-acid biosynthesis; L-serine biosynthesis; L-serine from 3-phospho-D-glycerate: step 2/3. The protein operates within cofactor biosynthesis; pyridoxine 5'-phosphate biosynthesis; pyridoxine 5'-phosphate from D-erythrose 4-phosphate: step 3/5. Its function is as follows. Catalyzes the reversible conversion of 3-phosphohydroxypyruvate to phosphoserine and of 3-hydroxy-2-oxo-4-phosphonooxybutanoate to phosphohydroxythreonine. The polypeptide is Phosphoserine aminotransferase (Klebsiella pneumoniae subsp. pneumoniae (strain ATCC 700721 / MGH 78578)).